The chain runs to 63 residues: Small ribosomal subunit protein uS14 (63 aa).

Zn(2+) is bound by residues Cys-26, Cys-29, Cys-42, and Cys-45.

Belongs to the universal ribosomal protein uS14 family. Zinc-binding uS14 subfamily. As to quaternary structure, part of the 30S ribosomal subunit. Contacts proteins S3 and S10. The cofactor is Zn(2+).

Binds 16S rRNA, required for the assembly of 30S particles and may also be responsible for determining the conformation of the 16S rRNA at the A site. The chain is Small ribosomal subunit protein uS14 from Gloeobacter violaceus (strain ATCC 29082 / PCC 7421).